Here is a 171-residue protein sequence, read N- to C-terminus: Large ribosomal subunit protein uL24 (171 aa).

The large ribosomal subunit protein uL24 stretch occupies residues 1–124; that stretch reads MNIKTGDTVV…AKPAKTKAEK (124 aa). Positions 108 to 171 are disordered; sequence GQTLDKAAKP…SVQKKGASGK (64 aa). The tract at residues 125-171 is unknown; that stretch reads VEKAATSSTDKPAKVTKAAKEAKPVKAVKSQKVEKNTSVQKKGASGK.

It belongs to the universal ribosomal protein uL24 family. In terms of assembly, part of the 50S ribosomal subunit.

One of two assembly initiator proteins, it binds directly to the 5'-end of the 23S rRNA, where it nucleates assembly of the 50S subunit. Functionally, one of the proteins that surrounds the polypeptide exit tunnel on the outside of the subunit. The protein is Large ribosomal subunit protein uL24 of Acholeplasma laidlawii (strain PG-8A).